Reading from the N-terminus, the 300-residue chain is Pleckstrin homology domain-containing family A member 3 (300 aa).

The PH domain maps to 1–93 (MEGVLYKWTN…WLVALGSSKA (93 aa)). Residues 1–100 (MEGVLYKWTN…SKACLTDTRT (100 aa)) are interaction with SACM1L. The tract at residues 97 to 300 (DTRTKKEKEI…SEDTLPSFSS (204 aa)) is interaction with VAPA and VAPB. The tract at residues 197–300 (PVSPSPVQMM…SEDTLPSFSS (104 aa)) is disordered. Phosphoserine is present on residues Ser236 and Ser244. Residues 279 to 290 (EESRLMAKKQSE) show a composition bias toward basic and acidic residues.

In terms of assembly, interacts with GTP-bound ARF1. Interacts with SACM1L and VAPA and/or VAPB to form a ternary complex. Widely expressed.

Its subcellular location is the golgi apparatus. The protein resides in the trans-Golgi network membrane. In terms of biological role, plays a role in regulation of vesicular cargo transport from the trans-Golgi network (TGN) to the plasma membrane. Regulates Golgi phosphatidylinositol 4-phosphate (PtdIns(4)P) levels and activates the PtdIns(4)P phosphatase activity of SACM1L when it binds PtdIns(4)P in 'trans' configuration. Binds preferentially to PtdIns(4)P. Negatively regulates APOB secretion from hepatocytes. This Homo sapiens (Human) protein is Pleckstrin homology domain-containing family A member 3 (PLEKHA3).